Here is a 534-residue protein sequence, read N- to C-terminus: Steroid hormone receptor family member cnr14 (534 aa).

Disordered stretches follow at residues 30 to 53 and 119 to 139; these read SGKT…QWSH and PATS…GHTT. The span at 119-130 shows a compositional bias: low complexity; it reads PATSVTSSLSPP. Positions 148–223 form a DNA-binding region, nuclear receptor; the sequence is ISFCKVCGDK…SGMSKDSVRQ (76 aa). 2 consecutive NR C4-type zinc fingers follow at residues 151-171 and 187-211; these read CKVC…CEGC and CLKQ…FKKC. Positions 252 to 493 constitute an NR LBD domain; it reads EVDAVYEAVL…PPLVVEMFQL (242 aa). The interval 502 to 534 is disordered; the sequence is HNNQENQYTPAPEHQSPQPQQPTPNQQQTPVHC. Positions 511 to 534 are enriched in low complexity; the sequence is PAPEHQSPQPQQPTPNQQQTPVHC.

The protein belongs to the nuclear hormone receptor family. NR1 subfamily. As to expression, most abundant in embryos.

Its subcellular location is the nucleus. In terms of biological role, transcriptional regulator which is involved in the sex determination and X chromosome dosage compensation pathways. Directly binds to five 5'-A(G/C)(G/T)(T/G)C(A/G)-3' sites in the promoter of sex-determining factor xol-1 to negatively regulate its expression and promote hermaphrodite development. Together with fox-1 is involved in making the distinction between one and two X-chromosomes. Plays a role in the fox-1-mediated repression of the functionally active isoform (isoform b) of the sex-determining factor xol-1 gene to promote hermaphrodite development. Plays a role in the association of the dosage compensation complex proteins dpy-27 and sdc-3 with the hermaphrodite X chromosomes. This Caenorhabditis elegans protein is Steroid hormone receptor family member cnr14.